A 957-amino-acid polypeptide reads, in one-letter code: Glycine dehydrogenase (decarboxylating) (957 aa).

An N6-(pyridoxal phosphate)lysine modification is found at Lys-708.

The protein belongs to the GcvP family. As to quaternary structure, the glycine cleavage system is composed of four proteins: P, T, L and H. The cofactor is pyridoxal 5'-phosphate.

The enzyme catalyses N(6)-[(R)-lipoyl]-L-lysyl-[glycine-cleavage complex H protein] + glycine + H(+) = N(6)-[(R)-S(8)-aminomethyldihydrolipoyl]-L-lysyl-[glycine-cleavage complex H protein] + CO2. Its function is as follows. The glycine cleavage system catalyzes the degradation of glycine. The P protein binds the alpha-amino group of glycine through its pyridoxal phosphate cofactor; CO(2) is released and the remaining methylamine moiety is then transferred to the lipoamide cofactor of the H protein. The protein is Glycine dehydrogenase (decarboxylating) of Escherichia coli O6:H1 (strain CFT073 / ATCC 700928 / UPEC).